A 146-amino-acid chain; its full sequence is Ribosome maturation factor RimP (146 aa).

The protein belongs to the RimP family.

It localises to the cytoplasm. In terms of biological role, required for maturation of 30S ribosomal subunits. The polypeptide is Ribosome maturation factor RimP (Helicobacter pylori (strain Shi470)).